The chain runs to 314 residues: Methenyltetrahydromethanopterin cyclohydrolase (314 aa).

This sequence belongs to the MCH family.

It is found in the cytoplasm. It catalyses the reaction 5,10-methenyl-5,6,7,8-tetrahydromethanopterin + H2O = N(5)-formyl-5,6,7,8-tetrahydromethanopterin + H(+). It participates in one-carbon metabolism; methanogenesis from CO(2); 5,10-methenyl-5,6,7,8-tetrahydromethanopterin from CO(2): step 3/3. Functionally, catalyzes the reversible interconversion of 5-formyl-H(4)MPT to methenyl-H(4)MPT(+). The sequence is that of Methenyltetrahydromethanopterin cyclohydrolase from Methanocorpusculum labreanum (strain ATCC 43576 / DSM 4855 / Z).